Here is a 292-residue protein sequence, read N- to C-terminus: ATP synthase gamma chain (292 aa).

It belongs to the ATPase gamma chain family. As to quaternary structure, F-type ATPases have 2 components, CF(1) - the catalytic core - and CF(0) - the membrane proton channel. CF(1) has five subunits: alpha(3), beta(3), gamma(1), delta(1), epsilon(1). CF(0) has three main subunits: a, b and c.

The protein localises to the cell membrane. Produces ATP from ADP in the presence of a proton gradient across the membrane. The gamma chain is believed to be important in regulating ATPase activity and the flow of protons through the CF(0) complex. In Streptococcus thermophilus (strain CNRZ 1066), this protein is ATP synthase gamma chain.